A 428-amino-acid polypeptide reads, in one-letter code: UPF0597 protein PBPRB0240 (428 aa).

The protein belongs to the UPF0597 family.

The sequence is that of UPF0597 protein PBPRB0240 from Photobacterium profundum (strain SS9).